Reading from the N-terminus, the 381-residue chain is Protein RecA (381 aa).

79–86 (GPESSGKT) is a binding site for ATP.

Belongs to the RecA family.

It is found in the cytoplasm. Its function is as follows. Can catalyze the hydrolysis of ATP in the presence of single-stranded DNA, the ATP-dependent uptake of single-stranded DNA by duplex DNA, and the ATP-dependent hybridization of homologous single-stranded DNAs. It interacts with LexA causing its activation and leading to its autocatalytic cleavage. In Streptococcus parasanguinis, this protein is Protein RecA.